A 264-amino-acid polypeptide reads, in one-letter code: Expansin-B3 (264 aa).

A signal peptide spans 1-25; it reads MQLFPVMLATLCIVLQLLIGSSALA. The Expansin-like EG45 domain occupies 54–162; sequence GGACGYGTLV…RRTACKYRGK (109 aa). Intrachain disulfides connect Cys-57-Cys-86, Cys-89-Cys-157, and Cys-94-Cys-100. Residues 175–256 enclose the Expansin-like CBD domain; sequence FWLSLLVEFE…NWAPKATYSS (82 aa).

This sequence belongs to the expansin family. Expansin B subfamily.

It localises to the secreted. The protein resides in the cell wall. The protein localises to the membrane. May cause loosening and extension of plant cell walls by disrupting non-covalent bonding between cellulose microfibrils and matrix glucans. No enzymatic activity has been found. In Arabidopsis thaliana (Mouse-ear cress), this protein is Expansin-B3 (EXPB3).